The sequence spans 484 residues: Threonine synthase-like 2 (484 aa).

An N6-(pyridoxal phosphate)lysine modification is found at Lys113.

It belongs to the threonine synthase family. Requires pyridoxal 5'-phosphate as cofactor.

The protein resides in the secreted. In terms of biological role, acts as a catabolic phospho-lyase on both gamma- and beta-phosphorylated substrates. Degrades O-phospho-threonine (PThr) to alpha-ketobutyrate, ammonia and phosphate. Potent inducer of osteoblastic production of IL6. May act to exacerbate inflammation and/or bone turnover under inflammatory conditions. This is Threonine synthase-like 2 (THNSL2) from Homo sapiens (Human).